The primary structure comprises 196 residues: DnaA initiator-associating protein DiaA (196 aa).

The region spanning 34-196 (LVHSLLNGNK…DNTLFPHQDD (163 aa)) is the SIS domain.

This sequence belongs to the SIS family. DiaA subfamily. Homotetramer; dimer of dimers.

Its function is as follows. Required for the timely initiation of chromosomal replication via direct interactions with the DnaA initiator protein. This chain is DnaA initiator-associating protein DiaA, found in Salmonella enteritidis PT4 (strain P125109).